A 205-amino-acid polypeptide reads, in one-letter code: Outer-membrane lipoprotein carrier protein (205 aa).

Residues 1–21 form the signal peptide; it reads MKKIVLLVTLVFSINYSFANA.

This sequence belongs to the LolA family. In terms of assembly, monomer.

It is found in the periplasm. Functionally, participates in the translocation of lipoproteins from the inner membrane to the outer membrane. Only forms a complex with a lipoprotein if the residue after the N-terminal Cys is not an aspartate (The Asp acts as a targeting signal to indicate that the lipoprotein should stay in the inner membrane). In Francisella philomiragia subsp. philomiragia (strain ATCC 25017 / CCUG 19701 / FSC 153 / O#319-036), this protein is Outer-membrane lipoprotein carrier protein.